A 653-amino-acid polypeptide reads, in one-letter code: Beta-galactosidase-1-like protein 3 (653 aa).

Glutamate 227 acts as the Proton donor in catalysis. The Nucleophile role is filled by glutamate 301.

It belongs to the glycosyl hydrolase 35 family.

The sequence is that of Beta-galactosidase-1-like protein 3 (GLB1L3) from Homo sapiens (Human).